The sequence spans 74 residues: Large ribosomal subunit protein bL31 (74 aa).

Cysteine 16, cysteine 18, cysteine 38, and cysteine 41 together coordinate Zn(2+).

The protein belongs to the bacterial ribosomal protein bL31 family. Type A subfamily. As to quaternary structure, part of the 50S ribosomal subunit. The cofactor is Zn(2+).

In terms of biological role, binds the 23S rRNA. This chain is Large ribosomal subunit protein bL31, found in Mycolicibacterium vanbaalenii (strain DSM 7251 / JCM 13017 / BCRC 16820 / KCTC 9966 / NRRL B-24157 / PYR-1) (Mycobacterium vanbaalenii).